The primary structure comprises 270 residues: Mevalonyl-coenzyme A hydratase sidH (270 aa).

The PTS1-type peroxisomal targeting signal motif lies at 268 to 270; the sequence is SKL.

Belongs to the enoyl-CoA hydratase/isomerase family.

The protein resides in the peroxisome. It functions in the pathway siderophore biosynthesis. Mevalonyl-coenzyme A hydratase; part of the siderophore biosynthetic pathway. Aspergillus fumigatus produces 4 types of siderophores, low-molecular-mass iron chelators, including excreted fusarinine C (FsC) and triacetylfusarinine C (TAFC) for iron uptake and intacellular ferricrocin (FC) for hyphal and hydroxyferricrocin (HFC) for conidial iron distribution and storage. TAFC consists of 3 N(2)-acetyl-N(5)-anhydromevalonyl-N(5)-hydroxyornithine residues cyclically linked by ester bonds; FC is a cyclic hexapeptide with the structure Gly-Ser-Gly-(N(5)-acetyl-N(5)-hydroxyornithine)x3. The biosynthesis of all four siderophores depends on the hydroxylation of ornithine, catalyzed by the monooxygenase sidA. Subsequently, the pathways for biosynthesis of extra- and intracellular siderophores split. For biosynthesis of extracellular siderophores, the transacylase sidF transfers anhydromevalonyl to N(5)-hydroxyornithine. The required anhydromevalonyl-CoA moiety is derived from mevalonate by CoA ligation and dehydration catalyzed by sidI and sidH respectively. The acetylation of N(5)-hydroxyornithine for FC biosynthesis involves the constitutively expressed sidL. FC is hydroxylated to HFC by an as yet uncharacterized enzyme during conidiation. Assembly of fusarinine C (FsC) and FC is catalyzed by two different nonribosomal peptide synthetases (NRPS), sidD and sidC respectively. Subsequently, sidG catalyzes N2-acetylation of FsC for forming TAFC. Both extra- and intracellular siderophores are crucial for growth during iron limitation and virulence. The polypeptide is Mevalonyl-coenzyme A hydratase sidH (Aspergillus fumigatus (strain ATCC MYA-4609 / CBS 101355 / FGSC A1100 / Af293) (Neosartorya fumigata)).